Consider the following 348-residue polypeptide: Rhodopsin (348 aa).

Met1 bears the N-acetylmethionine mark. The Extracellular portion of the chain corresponds to Met1–Gln36. Asn2 and Asn15 each carry an N-linked (GlcNAc...) asparagine glycan. The helical transmembrane segment at Phe37 to Val61 threads the bilayer. At Thr62–Asn73 the chain is on the cytoplasmic side. Residues Tyr74–Tyr96 form a helical membrane-spanning segment. Residues Thr97–Cys110 lie on the Extracellular side of the membrane. A disulfide bridge connects residues Cys110 and Cys187. Residues Asn111–Ile133 form a helical membrane-spanning segment. A 'Ionic lock' involved in activated form stabilization motif is present at residues Glu134–Tyr136. The Cytoplasmic portion of the chain corresponds to Glu134–His152. The helical transmembrane segment at Ala153–Val173 threads the bilayer. Residues Gly174 to Ser202 lie on the Extracellular side of the membrane. Glu201 is a binding site for Zn(2+). The helical transmembrane segment at Phe203–Gly224 threads the bilayer. Residues Gln225–Arg252 lie on the Cytoplasmic side of the membrane. Residues Met253–Tyr274 form a helical membrane-spanning segment. The Extracellular portion of the chain corresponds to Ile275–Ile286. Gln279 contributes to the Zn(2+) binding site. Residues Phe287–Met308 traverse the membrane as a helical segment. Lys296 bears the N6-(retinylidene)lysine mark. Over Met309–Ala348 the chain is Cytoplasmic. 2 S-palmitoyl cysteine lipidation sites follow: Cys322 and Cys323. Residues Asp330–Ala348 are interaction with SAG. Ser334 bears the Phosphoserine mark. Thr336 is modified (phosphothreonine). Ser338 is subject to Phosphoserine. Thr340 and Thr342 each carry phosphothreonine. At Ser343 the chain carries Phosphoserine.

It belongs to the G-protein coupled receptor 1 family. Opsin subfamily. In terms of assembly, homodimer. May form a complex composed of RHO, GRK1 and RCVRN in a Ca(2+)-dependent manner; RCVRN prevents the interaction between GRK1 and RHO. Interacts with GRK1. Interacts (phosphorylated form) with SAG. Interacts with GNAT1. Interacts with GNAT3. SAG and G-proteins compete for a common binding site. Interacts with PRCD; the interaction promotes PRCD stability. Forms a complex with ASAP1 and ARF4. Forms a complex with ASAP1, RAB11A, Rabin8/RAB3IP, ARF4 and RAB11FIP3; the complex regulates Golgi-to-cilia rhodopsin/RHO transport in photoreceptors. Phosphorylated on some or all of the serine and threonine residues present in the C-terminal region. In terms of processing, contains one covalently linked retinal chromophore. Upon light absorption, the covalently bound 11-cis-retinal is converted to all-trans-retinal. After hydrolysis of the Schiff base and release of the covalently bound all-trans-retinal, active rhodopsin is regenerated by binding of a fresh molecule of 11-cis-retinal.

Its subcellular location is the membrane. The protein localises to the cell projection. It localises to the cilium. The protein resides in the photoreceptor outer segment. In terms of biological role, photoreceptor required for image-forming vision at low light intensity. Required for photoreceptor cell viability after birth. Light-induced isomerization of 11-cis to all-trans retinal triggers a conformational change that activates signaling via G-proteins. Subsequent receptor phosphorylation mediates displacement of the bound G-protein alpha subunit by the arrestin SAG and terminates signaling. In Rattus norvegicus (Rat), this protein is Rhodopsin (Rho).